The chain runs to 738 residues: Propionyl-CoA carboxylase alpha chain, mitochondrial (738 aa).

The Biotin carboxylation domain occupies 62–509; sequence KFDKILIANR…TTKYLPEVYP (448 aa). ATP-binding positions include Lys177, 209–270, Glu261, and Asn296; that span reads SREI…PRHI. An ATP-grasp domain is found at 181–378; sequence KKIATAARVS…IVQQMLRVAY (198 aa). Positions 336, 349, and 351 each coordinate Mg(2+). Positions 336, 349, and 351 each coordinate Mn(2+). Residue Arg353 is part of the active site. Phe409 serves as a coordination point for biotin. A Biotinyl-binding domain is found at 663–738; the sequence is KAKVDLSTVV…DEGEVLVELE (76 aa). An N6-biotinyllysine modification is found at Lys704.

As to quaternary structure, the holoenzyme is a dodecamer composed of 6 alpha subunits and 6 beta subunits. Interacts with sir-2.2. The cofactor is biotin. Mg(2+) serves as cofactor. It depends on Mn(2+) as a cofactor. In terms of processing, the biotin cofactor is covalently attached to the C-terminal biotinyl-binding domain and is required for the catalytic activity.

Its subcellular location is the mitochondrion matrix. The catalysed reaction is propanoyl-CoA + hydrogencarbonate + ATP = (S)-methylmalonyl-CoA + ADP + phosphate + H(+). It carries out the reaction butanoyl-CoA + hydrogencarbonate + ATP = (2S)-ethylmalonyl-CoA + ADP + phosphate + H(+). The protein operates within metabolic intermediate metabolism; propanoyl-CoA degradation; succinyl-CoA from propanoyl-CoA: step 1/3. In terms of biological role, this is one of the 2 subunits of the biotin-dependent propionyl-CoA carboxylase (PCC), a mitochondrial enzyme involved in the catabolism of odd chain fatty acids, branched-chain amino acids isoleucine, threonine, methionine, and valine and other metabolites. Propionyl-CoA carboxylase catalyzes the carboxylation of propionyl-CoA/propanoyl-CoA to D-methylmalonyl-CoA/(S)-methylmalonyl-CoA. Within the holoenzyme, the alpha subunit catalyzes the ATP-dependent carboxylation of the biotin carried by the biotin carboxyl carrier (BCC) domain, while the beta subunit then transfers the carboxyl group from carboxylated biotin to propionyl-CoA. Propionyl-CoA carboxylase also significantly acts on butyryl-CoA/butanoyl-CoA, which is converted to ethylmalonyl-CoA/(2S)-ethylmalonyl-CoA. Other alternative minor substrates include (2E)-butenoyl-CoA/crotonoyl-CoA. The chain is Propionyl-CoA carboxylase alpha chain, mitochondrial (pcca-1) from Caenorhabditis briggsae.